Here is an 82-residue protein sequence, read N- to C-terminus: Putative membrane protein insertion efficiency factor (82 aa).

The protein belongs to the UPF0161 family.

It is found in the cell membrane. Functionally, could be involved in insertion of integral membrane proteins into the membrane. The chain is Putative membrane protein insertion efficiency factor from Streptococcus uberis (strain ATCC BAA-854 / 0140J).